The following is a 582-amino-acid chain: ATP-dependent lipid A-core flippase (582 aa).

5 consecutive transmembrane segments (helical) span residues 16–36 (LWPH…ALVI), 69–89 (FIIL…GYCM), 153–173 (IIGL…VLVV), 250–270 (LANP…LYLA), and 275–295 (IKET…FGLL). An ABC transmembrane type-1 domain is found at 29–310 (VAVVALVINA…LTSVTSDFQR (282 aa)). Residues 342 to 578 (IKVDNVTFTY…DGAYAQLHRI (237 aa)) enclose the ABC transporter domain. 376–383 (GRSGSGKS) provides a ligand contact to ATP.

It belongs to the ABC transporter superfamily. Lipid exporter (TC 3.A.1.106) family. Homodimer.

It localises to the cell inner membrane. The catalysed reaction is ATP + H2O + lipid A-core oligosaccharideSide 1 = ADP + phosphate + lipid A-core oligosaccharideSide 2.. In terms of biological role, involved in lipopolysaccharide (LPS) biosynthesis. Translocates lipid A-core from the inner to the outer leaflet of the inner membrane. Transmembrane domains (TMD) form a pore in the inner membrane and the ATP-binding domain (NBD) is responsible for energy generation. This is ATP-dependent lipid A-core flippase from Aliivibrio fischeri (strain ATCC 700601 / ES114) (Vibrio fischeri).